Here is a 234-residue protein sequence, read N- to C-terminus: HTH-type transcriptional regulator ArcR (234 aa).

40-129 (VRHYTKGQVI…MAFLCKANDD (90 aa)) is a binding site for a nucleoside 3',5'-cyclic phosphate. Residues 155–228 (KFAKDRIIKL…HKNWLVSKHL (74 aa)) form the HTH crp-type domain. Residues 188–207 (IQLMSDMAGISRETAGHIIH) constitute a DNA-binding region (H-T-H motif).

The protein resides in the cytoplasm. Positively regulates the expression of the arcABDCR operon under anaerobic conditions, thus playing an essential role in arginine catabolism. May also control the expression of genes encoding proteins which are involved in anaerobic metabolism. Can bind cyclic AMP. The polypeptide is HTH-type transcriptional regulator ArcR (arcR) (Staphylococcus aureus (strain MSSA476)).